Here is a 182-residue protein sequence, read N- to C-terminus: uncharacterized protein (182 aa).

2 disordered regions span residues 1 to 49 and 126 to 171; these read MAAP…DGGS and QGGH…VHAQ. Basic and acidic residues predominate over residues 17 to 39; the sequence is ELLEKAARLERGPPPRGDPEAVG.

This is an uncharacterized protein from Homo sapiens (Human).